Reading from the N-terminus, the 158-residue chain is Pleckstrin homology domain-containing family J member 1 (158 aa).

A PH domain is found at 15 to 108 (PTQRAAELGM…WIDAIIKASY (94 aa)).

This is Pleckstrin homology domain-containing family J member 1 (plekhj1) from Danio rerio (Zebrafish).